The primary structure comprises 318 residues: Ribonuclease Z (318 aa).

Zn(2+) contacts are provided by H62, H64, D66, H67, H139, D210, and H268. D66 (proton acceptor) is an active-site residue.

This sequence belongs to the RNase Z family. As to quaternary structure, homodimer. The cofactor is Zn(2+).

It carries out the reaction Endonucleolytic cleavage of RNA, removing extra 3' nucleotides from tRNA precursor, generating 3' termini of tRNAs. A 3'-hydroxy group is left at the tRNA terminus and a 5'-phosphoryl group is left at the trailer molecule.. In terms of biological role, zinc phosphodiesterase, which displays some tRNA 3'-processing endonuclease activity. Probably involved in tRNA maturation, by removing a 3'-trailer from precursor tRNA. In Gloeothece citriformis (strain PCC 7424) (Cyanothece sp. (strain PCC 7424)), this protein is Ribonuclease Z.